A 581-amino-acid polypeptide reads, in one-letter code: Dehydrocurvularin exporter (581 aa).

Positions 1 to 10 (MTDSPSLESN) are enriched in polar residues. Residues 1–47 (MTDSPSLESNNKSDMDTPRPPASSHDEHDAAESVSEKQDSATTSPTG) are disordered. An N-linked (GlcNAc...) asparagine glycan is attached at N11. A compositionally biased stretch (basic and acidic residues) spans 24 to 39 (SHDEHDAAESVSEKQD). 14 helical membrane-spanning segments follow: residues 61–81 (LVMFTIFVSTILVSLEIGIIA), 96–116 (DVGWYGSATFILAAAASPLWG), 126–146 (WVYLSAVGIFLVGSIVAAAAP), 159–179 (GWGASGVLGGTLIVINYVAPP), 184–204 (LLIGTWMAVFMMSTILGPVIG), 215–235 (WCFWINLPVGGPIVVLLLLFL), 251–271 (IILNLDIPGFCLLLVSLVCLT), 288–308 (VIATLVLWILLTIGFFIVEWL), 330–350 (IFCLVSYAALYQVMFYLPIYF), 363–383 (VNTLPFLAFFALGAMVSGGAI), 392–412 (YELAGALIMTAGMALIYILDV), 424–444 (VLFGFGIGLCNQVPMTAVQGF), 456–476 (IMVMCQTLSGAYFVAIAQSLF), and 527–547 (VFAFSLACAAFSVILTALIPF). Residues 552 to 581 (DHEKKPSKDAMASDEVKASEEVQQEKKVTV) form a disordered region. Residues 565–581 (DEVKASEEVQQEKKVTV) are compositionally biased toward basic and acidic residues.

The protein belongs to the major facilitator superfamily. TCR/Tet family.

It is found in the cell membrane. Functionally, efflux pump that is probably involved in the export of dehydrocurvularin. The protein is Dehydrocurvularin exporter of Alternaria cinerariae.